The following is a 568-amino-acid chain: Potassium-transporting ATPase potassium-binding subunit (568 aa).

10 helical membrane passes run 7–27 (AEIA…GLFL), 65–85 (SYAL…YAIL), 135–155 (AGLT…AAAV), 177–197 (VSLY…VALG), 254–274 (LTNL…VVAF), 286–306 (ALIT…YWTE), 383–403 (GLYG…LMVG), 422–442 (MLAV…AAVL), 489–509 (LGIA…AIAG), and 530–550 (LFIG…FFPA).

It belongs to the KdpA family. As to quaternary structure, the system is composed of three essential subunits: KdpA, KdpB and KdpC.

Its subcellular location is the cell inner membrane. Functionally, part of the high-affinity ATP-driven potassium transport (or Kdp) system, which catalyzes the hydrolysis of ATP coupled with the electrogenic transport of potassium into the cytoplasm. This subunit binds the periplasmic potassium ions and delivers the ions to the membrane domain of KdpB through an intramembrane tunnel. This Beijerinckia indica subsp. indica (strain ATCC 9039 / DSM 1715 / NCIMB 8712) protein is Potassium-transporting ATPase potassium-binding subunit.